The chain runs to 324 residues: NADH-ubiquinone oxidoreductase chain 1 (324 aa).

The next 8 membrane-spanning stretches (helical) occupy residues 9–29, 75–95, 106–126, 146–166, 177–197, 237–257, 259–279, and 299–319; these read VLNPLAYIVPVLLAVAFLTLL, FLFLATPMLALTLALTLWAPM, LGVLFVLALSSLAVYSILGSG, ISYEVSLGLILLSVIIFTGGF, SIWLVVPAWPLAALWYISTLA, ILLMNTLSAILFLGATHIPAL, ELTAMNLMTKAALLSVVFLWV, and FLPMTLALVLWHLALPIALAG.

The protein belongs to the complex I subunit 1 family.

It is found in the mitochondrion inner membrane. It catalyses the reaction a ubiquinone + NADH + 5 H(+)(in) = a ubiquinol + NAD(+) + 4 H(+)(out). Core subunit of the mitochondrial membrane respiratory chain NADH dehydrogenase (Complex I) that is believed to belong to the minimal assembly required for catalysis. Complex I functions in the transfer of electrons from NADH to the respiratory chain. The immediate electron acceptor for the enzyme is believed to be ubiquinone. The chain is NADH-ubiquinone oxidoreductase chain 1 (MT-ND1) from Thymallus arcticus (Arctic grayling).